The following is a 356-amino-acid chain: Protein RecA (356 aa).

Residue glycine 68–threonine 75 participates in ATP binding.

It belongs to the RecA family.

The protein resides in the cytoplasm. Functionally, can catalyze the hydrolysis of ATP in the presence of single-stranded DNA, the ATP-dependent uptake of single-stranded DNA by duplex DNA, and the ATP-dependent hybridization of homologous single-stranded DNAs. It interacts with LexA causing its activation and leading to its autocatalytic cleavage. This chain is Protein RecA, found in Thermotoga maritima (strain ATCC 43589 / DSM 3109 / JCM 10099 / NBRC 100826 / MSB8).